Here is a 208-residue protein sequence, read N- to C-terminus: Probable GTP-binding protein EngB (208 aa).

Residues 23-205 (LTSEMVILGR…RQTLLKYLLT (183 aa)) form the EngB-type G domain. GTP-binding positions include 31 to 38 (GRSNVGKS), 57 to 61 (GKTRL), 84 to 87 (DLPG), 154 to 157 (TKFD), and 182 to 184 (FNA). Ser-38 and Thr-59 together coordinate Mg(2+).

This sequence belongs to the TRAFAC class TrmE-Era-EngA-EngB-Septin-like GTPase superfamily. EngB GTPase family. Mg(2+) is required as a cofactor.

Functionally, necessary for normal cell division and for the maintenance of normal septation. In Helicobacter pylori (strain P12), this protein is Probable GTP-binding protein EngB.